Consider the following 278-residue polypeptide: Putative phosphoenolpyruvate synthase regulatory protein (278 aa).

Gly158–Thr165 is a binding site for ADP.

It belongs to the pyruvate, phosphate/water dikinase regulatory protein family. PSRP subfamily.

It catalyses the reaction [pyruvate, water dikinase] + ADP = [pyruvate, water dikinase]-phosphate + AMP + H(+). The catalysed reaction is [pyruvate, water dikinase]-phosphate + phosphate + H(+) = [pyruvate, water dikinase] + diphosphate. Bifunctional serine/threonine kinase and phosphorylase involved in the regulation of the phosphoenolpyruvate synthase (PEPS) by catalyzing its phosphorylation/dephosphorylation. The sequence is that of Putative phosphoenolpyruvate synthase regulatory protein from Acinetobacter baylyi (strain ATCC 33305 / BD413 / ADP1).